We begin with the raw amino-acid sequence, 210 residues long: MATTFSLPPLPYAYDALEPVICKQIMEIHHQKHHQTYITNLNAALSAQSTALAANNIPQLINLQQKIKFNGGGHINHSLFWKNLAPHASPETNIDQAAPVLKAAIEAQYGSVEKFKEAFGATLLGLQGSGWGWLVANGPGGKLEIVSTKDQDPVTDKVPVFGVDMWEHAYYLQYFNNKASYVEGIWKVLNWRTAEDRFKNGVEGSALLKL.

His-29, His-77, Asp-164, and His-168 together coordinate Mn(2+).

The protein belongs to the iron/manganese superoxide dismutase family. As to quaternary structure, homotetramer. It depends on Mn(2+) as a cofactor.

The protein localises to the mitochondrion matrix. The catalysed reaction is 2 superoxide + 2 H(+) = H2O2 + O2. Functionally, destroys superoxide anion radicals which are normally produced within the cells and which are toxic to biological systems. This chain is Superoxide dismutase [Mn], mitochondrial (sodB), found in Aspergillus oryzae (strain ATCC 42149 / RIB 40) (Yellow koji mold).